Reading from the N-terminus, the 863-residue chain is MRYMTSEEIREAFLKFFEKKGHKILPSASLIPDDPQLLFTVAGMVPFKPIFWGKVEPVYTRVATCQKCLRTVDIENVGKTPRHHTFFEMLGNFSFGDYFKEEAIEWAWEFLTQVLGVPEEKLWVSVYEEDEEAFRIWNEKIGLPEKRILRMGKEDNFWGPAGPTGPCGPDTEIFYDTGYSKGCPEGEGCTPANSEGRFVEIWNLVFTEYYQDEEGKLHPLPRKNIDTGAGLERFCAMMQGVYSNFDTDLFQPIIKRIEELTGVGYKTDEEKDVSIRVIADHIRAITFLISEGVFPSNEGRGYVLRRIIRRAMRHGILLGMSEPFLYRIVDAVVEKMGKVYPEIVRGEGMVKEVLSAEENRFLKTLEQGMKVFDEIVEKKGKIDSEDAFRLYDTYGLPLELTLEIAKEKGVEVDVQEFNKYMEEQQRKSRAAMGDVEFARRYEYLEKLPKDFRTEFTGYEKLEDEGEVVLVARDDETVEEASEGTVEVVFSRTPFYAEKGGQVSDTGMVEWRDGKALVEYVFEASEGVIVHRIKILDGTLRRGQKVILRVDKKRREATMRNHTATHLLHAALKKVLGDHVRQAGSLVAPDRLRFDFTHFKGLSSAEIEQVEDLVNEWIMEAIPVEVRYTSYEEAVKSGVVALFTEKYGDVVRVVEVPGVSKELCGGTHVKNTGQIGLFKIISEESVSSGVRRIEAVTGFSALELLRNQKKLIDQLKEILGAREDELTDRVLSLREKVKELEKKLSQGRISEERIAMKQLEDGVKVFHGVFEGVEAKHLGGIADNVLKKEGEGIVILFSKFENKVSLVVKVSENLLGKYDASSIARNIAKELGGNGGGRKNFAQAGGRHPERIKDVLERLEEFLR.

Zn(2+) contacts are provided by H561, H565, C663, and H667.

It belongs to the class-II aminoacyl-tRNA synthetase family. Requires Zn(2+) as cofactor.

It is found in the cytoplasm. It catalyses the reaction tRNA(Ala) + L-alanine + ATP = L-alanyl-tRNA(Ala) + AMP + diphosphate. Its function is as follows. Catalyzes the attachment of alanine to tRNA(Ala) in a two-step reaction: alanine is first activated by ATP to form Ala-AMP and then transferred to the acceptor end of tRNA(Ala). Also edits incorrectly charged Ser-tRNA(Ala) and Gly-tRNA(Ala) via its editing domain. The protein is Alanine--tRNA ligase of Thermotoga maritima (strain ATCC 43589 / DSM 3109 / JCM 10099 / NBRC 100826 / MSB8).